The following is a 446-amino-acid chain: Xylose isomerase 1 (446 aa).

Catalysis depends on residues H109 and D112. Mg(2+)-binding residues include E240, E276, H279, D304, D315, D317, and D347.

This sequence belongs to the xylose isomerase family. As to quaternary structure, homotetramer. Mg(2+) is required as a cofactor.

The protein resides in the cytoplasm. It carries out the reaction alpha-D-xylose = alpha-D-xylulofuranose. This chain is Xylose isomerase 1, found in Xanthomonas campestris pv. campestris (strain 8004).